Reading from the N-terminus, the 1481-residue chain is Cystic fibrosis transmembrane conductance regulator (1481 aa).

Over 1 to 77 (MQRSPLEKAS…KLINALRRCF (77 aa)) the chain is Cytoplasmic. A helical transmembrane segment spans residues 78–98 (FWRFMFYGILLYLGEVTKAVQ). Residues 81 to 365 (FMFYGILLYL…WAVQTWYDSL (285 aa)) enclose the ABC transmembrane type-1 1 domain. Over 99-122 (PLLLGRIIASYDPDNKEERSIAIY) the chain is Extracellular. A helical membrane pass occupies residues 123-146 (LGIGLCLLFIVRTLLLHPAIFGLH). At 147 to 195 (HIGMQMRIAMFSLIYKKTLKLSSRVLDKISIGQLVSLLSNNLNKFDEGL) the chain is on the cytoplasmic side. Residues 196-216 (ALAHFVWIVPLQVALLMGLIW) form a helical membrane-spanning segment. The Extracellular portion of the chain corresponds to 217-222 (ELLQAS). The helical transmembrane segment at 223-243 (AFCGLGFLIVLALFQAGLGRM) threads the bilayer. The Cytoplasmic segment spans residues 244-298 (MMKYRDQRAGKINERLVITSEMIENIQSVKAYCWEEAMEKMIENLRQTELKLTRK). Residues 299–319 (AAYVRYFNSSAFFFSGFFVVF) traverse the membrane as a helical segment. Residues 320–339 (LSVLPYALIKGIVLRKIFTT) lie on the Extracellular side of the membrane. Residues 340 to 358 (ISFCIVLRMAVTRQFPWAV) traverse the membrane as a helical segment. Over 359-858 (QTWYDSLGAI…YLRYITVHKS (500 aa)) the chain is Cytoplasmic. ATP-binding positions include W401, S434, 458–465 (GSTGAGKT), and Q493. Residues 423 to 646 (NDDDSLFFSN…RPDFSSKLMG (224 aa)) enclose the ABC transporter 1 domain. The S-palmitoyl cysteine moiety is linked to residue C524. Residues S549 and S660 each carry the phosphoserine modification. Positions 654 to 831 (SAERRNSILT…EEINEEDLKE (178 aa)) are disordered R region. S670 carries the post-translational modification Phosphoserine; by PKA. A Phosphoserine modification is found at S686. K688 is covalently cross-linked (Glycyl lysine isopeptide (Lys-Gly) (interchain with G-Cter in ubiquitin)). S700 and S712 each carry phosphoserine. T717 carries the post-translational modification Phosphothreonine. 6 positions are modified to phosphoserine: S737, S753, S768, S790, S795, and S813. A helical transmembrane segment spans residues 859–879 (LIFVLIWCLVIFLAEVAASLV). The 297-residue stretch at 859 to 1155 (LIFVLIWCLV…AVNSSIDVDS (297 aa)) folds into the ABC transmembrane type-1 2 domain. At 880 to 918 (VLWFLGNTPPQDKGNSTYSRNNSYAVIITRTSSYYVFYI) the chain is on the extracellular side. N-linked (GlcNAc...) asparagine glycosylation is found at N894 and N900. Residues 919-939 (YVGVADTLLAMGFFRGLPLVH) form a discontinuously helical membrane-spanning segment. The Cytoplasmic portion of the chain corresponds to 940-990 (TLITVSKILHHKMLHSVLQAPMSTLNTLKAGGILNRFSKDIAILDDLLPLT). The helical transmembrane segment at 991–1011 (IFDFIQLLLIVIGAIAVVAVL) threads the bilayer. Topologically, residues 1012-1013 (QP) are extracellular. The chain crosses the membrane as a helical span at residues 1014–1034 (YIFVATVPVIVAFIMLRAYFL). Topologically, residues 1035 to 1095 (QTSQQLKQLE…TANWFLYLST (61 aa)) are cytoplasmic. A helical membrane pass occupies residues 1096–1116 (LRWFQMRIEMIFVIFFIAVTF). Over 1117–1130 (ISILTTGEGEGTVG) the chain is Extracellular. Residues 1131 to 1151 (IILTLAMNIMSTLQWAVNSSI) form a helical membrane-spanning segment. At 1152 to 1481 (DVDSLMRSVS…TEEEVQDTRL (330 aa)) the chain is on the cytoplasmic side. An ABC transporter 2 domain is found at 1211–1444 (MTVKDLTAKY…RSLFRQAISP (234 aa)). ATP contacts are provided by residues Y1220 and 1245-1252 (GRTGSGKS). An interaction with GORASP2 region spans residues 1387–1481 (RTLKQAFADC…TEEEVQDTRL (95 aa)). A lipid anchor (S-palmitoyl cysteine) is attached at C1396. 2 positions are modified to phosphoserine: S1445 and S1457. A disordered region spans residues 1462–1481 (QPQIAALKEETEEEVQDTRL). The span at 1471–1481 (ETEEEVQDTRL) shows a compositional bias: acidic residues. The short motif at 1479-1481 (TRL) is the PDZ-binding element.

The protein belongs to the ABC transporter superfamily. ABCC family. CFTR transporter (TC 3.A.1.202) subfamily. Monomer; does not require oligomerization for channel activity. May form oligomers in the membrane. Interacts with SLC26A3, SLC26A6 and NHERF1. Interacts with SHANK2. Interacts with MYO6. Interacts (via C-terminus) with GOPC (via PDZ domain); this promotes CFTR internalization and thereby decreases channel activity. Interacts with SLC4A7 through NHERF1. Found in a complex with MYO5B and RAB11A. Interacts with ANO1. Interacts with SLC26A8. Interacts with AHCYL1; the interaction increases CFTR activity. Interacts with CSE1L. The core-glycosylated form interacts with GORASP2 (via PDZ GRASP-type 1 domain) in respone to ER stress. Interacts with MARCHF2; the interaction leads to CFTR ubiqtuitination and degradation. Interacts with ADGRG2. In terms of processing, N-glycosylated. Phosphorylated; cAMP treatment promotes phosphorylation and activates the channel. Dephosphorylation decreases the ATPase activity (in vitro). Phosphorylation at PKA sites activates the channel. Phosphorylation at PKC sites enhances the response to phosphorylation by PKA. Phosphorylated by AMPK; this inhibits channel activity. Post-translationally, ubiquitinated, leading to its degradation in the lysosome. Deubiquitination by USP10 in early endosomes enhances its endocytic recycling to the cell membrane. Ubiquitinated by RNF185 during ER stress. Ubiquitinated by MARCHF2.

It is found in the apical cell membrane. The protein resides in the early endosome membrane. The protein localises to the cell membrane. Its subcellular location is the recycling endosome membrane. It localises to the endoplasmic reticulum membrane. It is found in the nucleus. The catalysed reaction is ATP + H2O + closed Cl(-) channel = ADP + phosphate + open Cl(-) channel.. The enzyme catalyses chloride(in) = chloride(out). It catalyses the reaction hydrogencarbonate(in) = hydrogencarbonate(out). It carries out the reaction ATP + H2O = ADP + phosphate + H(+). Functionally, epithelial ion channel that plays an important role in the regulation of epithelial ion and water transport and fluid homeostasis. Mediates the transport of chloride ions across the cell membrane. Possesses an intrinsic ATPase activity and utilizes ATP to gate its channel; the passive flow of anions through the channel is gated by cycles of ATP binding and hydrolysis by the ATP-binding domains. The ion channel is also permeable to HCO(3)(-); selectivity depends on the extracellular chloride concentration. Exerts its function also by modulating the activity of other ion channels and transporters. Contributes to the regulation of the pH and the ion content of the epithelial fluid layer. Modulates the activity of the epithelial sodium channel (ENaC) complex, in part by regulating the cell surface expression of the ENaC complex. May regulate bicarbonate secretion and salvage in epithelial cells by regulating the transporter SLC4A7. Can inhibit the chloride channel activity of ANO1. Plays a role in the chloride and bicarbonate homeostasis during sperm epididymal maturation and capacitation. This Papio anubis (Olive baboon) protein is Cystic fibrosis transmembrane conductance regulator.